The following is a 553-amino-acid chain: Putative transport protein YidE (553 aa).

The next 5 membrane-spanning stretches (helical) occupy residues 4–24 (IALT…IGNI), 28–48 (GVGF…HFVD), 65–85 (FGLI…FFAS), 95–115 (LFAV…HKIF), and 158–178 (MSYA…MWLM). 2 RCK C-terminal domains span residues 192-276 (KHES…VIGK) and 279-361 (DTSL…VVGN). 6 helical membrane passes run 371-391 (MLPV…PLFV), 393-413 (GFPV…ALIL), 437-457 (LGIV…FVDT), 464-484 (LSWI…VGLL), 493-513 (YLTL…LAFA), and 533-553 (LVMF…WGMG).

The protein belongs to the AAE transporter (TC 2.A.81) family. YidE subfamily.

Its subcellular location is the cell membrane. The chain is Putative transport protein YidE from Salmonella newport (strain SL254).